The following is a 102-amino-acid chain: Large ribosomal subunit protein bL21 (102 aa).

This sequence belongs to the bacterial ribosomal protein bL21 family. Part of the 50S ribosomal subunit. Contacts protein L20.

This protein binds to 23S rRNA in the presence of protein L20. The polypeptide is Large ribosomal subunit protein bL21 (Nocardioides sp. (strain ATCC BAA-499 / JS614)).